A 40-amino-acid polypeptide reads, in one-letter code: Probable non-specific lipid-transfer protein (40 aa).

This sequence belongs to the plant LTP family. Post-translationally, phosphorylated by Ca(2+)-dependent protein kinase.

Its function is as follows. Plant non-specific lipid-transfer proteins transfer phospholipids as well as galactolipids across membranes. May play a role in wax or cutin deposition in the cell walls of expanding epidermal cells and certain secretory tissues. This Triticum aestivum (Wheat) protein is Probable non-specific lipid-transfer protein.